Consider the following 384-residue polypeptide: Guanine nucleotide-binding protein alpha-2 subunit (384 aa).

The segment at 1-23 is disordered; the sequence is MGLVCSRNRRYRDSDPEENAQAA. The N-myristoyl glycine moiety is linked to residue G2. The S-palmitoyl cysteine moiety is linked to residue C5. The G-alpha domain maps to 38 to 384; that stretch reads HIQKLLLLGA…RRNLFEAGLL (347 aa). Positions 41–54 are G1 motif; that stretch reads KLLLLGAGESGKST. E49, S50, G51, K52, S53, T54, D163, L188, Y189, T194, G222, N288, K289, D291, and A356 together coordinate GTP. S53 contacts Mg(2+). Residues 186-194 are G2 motif; sequence DVLYARVRT. Residue T194 coordinates Mg(2+). The interval 215-224 is G3 motif; that stretch reads YRLFDVGGQR. The segment at 284-291 is G4 motif; it reads MLFLNKFD. The interval 354–359 is G5 motif; it reads TTALDQ.

It belongs to the G-alpha family. As to quaternary structure, g proteins are composed of 3 units; alpha, beta and gamma. The alpha chain contains the guanine nucleotide binding site. The cofactor is Mg(2+).

Functionally, guanine nucleotide-binding proteins (G proteins) are involved as modulators or transducers in various transmembrane signaling systems. This Pisum sativum (Garden pea) protein is Guanine nucleotide-binding protein alpha-2 subunit (GPA2).